A 723-amino-acid chain; its full sequence is Fatty acid oxidation complex subunit alpha (723 aa).

An enoyl-CoA hydratase/isomerase region spans residues 1 to 189 (MIYQAETLQV…KIGLLDAVVD (189 aa)). Asp-296 is a binding site for substrate. The interval 311–723 (NKETQRAAVL…FYGAQQQGSI (413 aa)) is 3-hydroxyacyl-CoA dehydrogenase. Residues Met-325, Asp-344, 401 to 403 (VVE), Lys-408, and Ser-430 contribute to the NAD(+) site. His-451 acts as the For 3-hydroxyacyl-CoA dehydrogenase activity in catalysis. Residue Asn-454 participates in NAD(+) binding. Substrate is bound by residues Asn-501 and Tyr-661.

In the N-terminal section; belongs to the enoyl-CoA hydratase/isomerase family. It in the C-terminal section; belongs to the 3-hydroxyacyl-CoA dehydrogenase family. In terms of assembly, heterotetramer of two alpha chains (FadB) and two beta chains (FadA).

The enzyme catalyses a (3S)-3-hydroxyacyl-CoA + NAD(+) = a 3-oxoacyl-CoA + NADH + H(+). The catalysed reaction is a (3S)-3-hydroxyacyl-CoA = a (2E)-enoyl-CoA + H2O. It carries out the reaction a 4-saturated-(3S)-3-hydroxyacyl-CoA = a (3E)-enoyl-CoA + H2O. It catalyses the reaction (3S)-3-hydroxybutanoyl-CoA = (3R)-3-hydroxybutanoyl-CoA. The enzyme catalyses a (3Z)-enoyl-CoA = a 4-saturated (2E)-enoyl-CoA. The catalysed reaction is a (3E)-enoyl-CoA = a 4-saturated (2E)-enoyl-CoA. It participates in lipid metabolism; fatty acid beta-oxidation. Functionally, involved in the aerobic and anaerobic degradation of long-chain fatty acids via beta-oxidation cycle. Catalyzes the formation of 3-oxoacyl-CoA from enoyl-CoA via L-3-hydroxyacyl-CoA. It can also use D-3-hydroxyacyl-CoA and cis-3-enoyl-CoA as substrate. The chain is Fatty acid oxidation complex subunit alpha from Vibrio vulnificus (strain YJ016).